The sequence spans 702 residues: Ribosomal RNA large subunit methyltransferase K/L (702 aa).

Positions 43 to 154 (LVYQSLMWSR…KETASIALDL (112 aa)) constitute a THUMP domain.

It belongs to the methyltransferase superfamily. RlmKL family.

Its subcellular location is the cytoplasm. The catalysed reaction is guanosine(2445) in 23S rRNA + S-adenosyl-L-methionine = N(2)-methylguanosine(2445) in 23S rRNA + S-adenosyl-L-homocysteine + H(+). It catalyses the reaction guanosine(2069) in 23S rRNA + S-adenosyl-L-methionine = N(2)-methylguanosine(2069) in 23S rRNA + S-adenosyl-L-homocysteine + H(+). Functionally, specifically methylates the guanine in position 2445 (m2G2445) and the guanine in position 2069 (m7G2069) of 23S rRNA. The sequence is that of Ribosomal RNA large subunit methyltransferase K/L from Shigella dysenteriae serotype 1 (strain Sd197).